We begin with the raw amino-acid sequence, 546 residues long: Phenylalanine--tRNA ligase beta subunit (546 aa).

The 77-residue stretch at Leu-266–Ala-342 folds into the B5 domain. Residues Asp-320, Asp-326, Glu-329, and Asp-330 each contribute to the Mg(2+) site.

The protein belongs to the phenylalanyl-tRNA synthetase beta subunit family. Type 2 subfamily. In terms of assembly, tetramer of two alpha and two beta subunits. Requires Mg(2+) as cofactor.

The protein localises to the cytoplasm. It carries out the reaction tRNA(Phe) + L-phenylalanine + ATP = L-phenylalanyl-tRNA(Phe) + AMP + diphosphate + H(+). This Methanoculleus marisnigri (strain ATCC 35101 / DSM 1498 / JR1) protein is Phenylalanine--tRNA ligase beta subunit.